We begin with the raw amino-acid sequence, 290 residues long: TIP41-like protein (290 aa).

It belongs to the TIP41 family. Interacts with TAP46. Widely expressed.

May be involved in the regulation of the TOR signaling pathway. Indirectly activates the PP2A phosphatase via interaction with its suppressor TAP46. Could play a role in cytoskeleton functions. The sequence is that of TIP41-like protein from Arabidopsis thaliana (Mouse-ear cress).